The sequence spans 210 residues: MEESWGEPGETVEEPTSIEVQDIKLFGKWPLEGLNISDISLTDYIAVKDNHAVYLPHTAARYAVKRFRKAQCPIVERLTNSLMMHGRNNGKKLMAVRIVRHSFEIMHLLTGENPLQLVCEAISNSGPREDSTRIGRAGTVRRQAVDVAPLRRVNQAIWLLCTGAREASFRNIKSIAECLADELINAARGSSNSYAIKKKDELERVAKSNR.

The protein belongs to the universal ribosomal protein uS7 family.

The polypeptide is Small ribosomal subunit protein uS7 (RPS5) (Podocoryna carnea (Hydrozoan)).